A 268-amino-acid chain; its full sequence is MSSALMPVKTHIVIPARLKSTRLPNKPLLTIHGKPMILWVAEKARLADFADDMCIATDDESIAKICLDAGFDVVMTSSEHASGTDRLAEVAAIKGWAAHDIVVNMQGDEPLVPPLLLEQVKTLLVQDAESVMATLCEPIEDYDTFMRPSVVKVVSQTSNDQQRALYFSRAPIPCNRDVVLTSENSKQPPKNAYRHLGLYAYRVSLLQQFVHCSQTPLEILESLEQLRVLENGGHIAIAKAACSLPAGVDTQEDLDRLNAMSLTDFQDY.

Belongs to the KdsB family.

The protein localises to the cytoplasm. The enzyme catalyses 3-deoxy-alpha-D-manno-oct-2-ulosonate + CTP = CMP-3-deoxy-beta-D-manno-octulosonate + diphosphate. Its pathway is nucleotide-sugar biosynthesis; CMP-3-deoxy-D-manno-octulosonate biosynthesis; CMP-3-deoxy-D-manno-octulosonate from 3-deoxy-D-manno-octulosonate and CTP: step 1/1. It functions in the pathway bacterial outer membrane biogenesis; lipopolysaccharide biosynthesis. Activates KDO (a required 8-carbon sugar) for incorporation into bacterial lipopolysaccharide in Gram-negative bacteria. This Psychrobacter cryohalolentis (strain ATCC BAA-1226 / DSM 17306 / VKM B-2378 / K5) protein is 3-deoxy-manno-octulosonate cytidylyltransferase.